The sequence spans 128 residues: Holo-[acyl-carrier-protein] synthase (128 aa).

Mg(2+) is bound by residues aspartate 9 and glutamate 56.

The protein belongs to the P-Pant transferase superfamily. AcpS family. The cofactor is Mg(2+).

Its subcellular location is the cytoplasm. It catalyses the reaction apo-[ACP] + CoA = holo-[ACP] + adenosine 3',5'-bisphosphate + H(+). Functionally, transfers the 4'-phosphopantetheine moiety from coenzyme A to a Ser of acyl-carrier-protein. The protein is Holo-[acyl-carrier-protein] synthase of Pelagibacter ubique (strain HTCC1062).